The chain runs to 357 residues: Anthranilate phosphoribosyltransferase (357 aa).

5-phospho-alpha-D-ribose 1-diphosphate contacts are provided by residues Gly-91, 94–95 (GD), Thr-99, 101–104 (NIST), 119–127 (KHGNRSVSS), and Ser-131. Gly-91 provides a ligand contact to anthranilate. Mg(2+) is bound at residue Ser-103. Asn-122 contributes to the anthranilate binding site. Anthranilate is bound at residue Arg-177. Mg(2+) is bound by residues Asp-235 and Glu-236.

It belongs to the anthranilate phosphoribosyltransferase family. Homodimer. Mg(2+) is required as a cofactor.

It catalyses the reaction N-(5-phospho-beta-D-ribosyl)anthranilate + diphosphate = 5-phospho-alpha-D-ribose 1-diphosphate + anthranilate. It functions in the pathway amino-acid biosynthesis; L-tryptophan biosynthesis; L-tryptophan from chorismate: step 2/5. Catalyzes the transfer of the phosphoribosyl group of 5-phosphorylribose-1-pyrophosphate (PRPP) to anthranilate to yield N-(5'-phosphoribosyl)-anthranilate (PRA). This Shewanella baltica (strain OS155 / ATCC BAA-1091) protein is Anthranilate phosphoribosyltransferase.